The primary structure comprises 434 residues: Nicotinate phosphoribosyltransferase (434 aa).

Phosphohistidine; by autocatalysis is present on His242.

The protein belongs to the NAPRTase family. Post-translationally, transiently phosphorylated on a His residue during the reaction cycle. Phosphorylation strongly increases the affinity for substrates and increases the rate of nicotinate D-ribonucleotide production. Dephosphorylation regenerates the low-affinity form of the enzyme, leading to product release.

It catalyses the reaction nicotinate + 5-phospho-alpha-D-ribose 1-diphosphate + ATP + H2O = nicotinate beta-D-ribonucleotide + ADP + phosphate + diphosphate. It participates in cofactor biosynthesis; NAD(+) biosynthesis; nicotinate D-ribonucleotide from nicotinate: step 1/1. Functionally, catalyzes the synthesis of beta-nicotinate D-ribonucleotide from nicotinate and 5-phospho-D-ribose 1-phosphate at the expense of ATP. The protein is Nicotinate phosphoribosyltransferase of Rhizobium rhizogenes (strain K84 / ATCC BAA-868) (Agrobacterium radiobacter).